We begin with the raw amino-acid sequence, 579 residues long: UPF0329 protein ECU06_1620 (579 aa).

2 disordered regions span residues 325–360 (EEKA…GEEA) and 370–389 (ARRK…KIHK). Basic residues predominate over residues 329–338 (KGRKDGKKKS). Acidic residues predominate over residues 345–360 (KEEESETEEVEAGEEA).

It belongs to the UPF0329 family.

This chain is UPF0329 protein ECU06_1620, found in Encephalitozoon cuniculi (strain GB-M1) (Microsporidian parasite).